A 249-amino-acid polypeptide reads, in one-letter code: MADPVEQFEIHKIFSLGHIGGQEIAFTNSSLYMLLAVGAVALLMLGGSAGRRLVPTRFQSMAELSYEFVVNMVRESLGEEGMKFFPLVFSIFMFVLMANLIGVIPYTFSVTSHLIVTVALALIVFLTVLLYGLYKNGLKFFRVFVPSGVPIYILPLIAMIEVISFLSRPVSHSVRLFANMLAGHITLKVFASFVTSLGALGVAGIAGAALPLAMTTAISILEVLVALLQAYVFAILTCIYLNDALHPGH.

6 consecutive transmembrane segments (helical) span residues 30 to 50 (SLYMLLAVGAVALLMLGGSAG), 84 to 104 (FFPLVFSIFMFVLMANLIGVI), 114 to 134 (LIVTVALALIVFLTVLLYGLY), 143 to 163 (VFVPSGVPIYILPLIAMIEVI), 193 to 213 (FVTSLGALGVAGIAGAALPLA), and 220 to 240 (ILEVLVALLQAYVFAILTCIY).

This sequence belongs to the ATPase A chain family. As to quaternary structure, F-type ATPases have 2 components, CF(1) - the catalytic core - and CF(0) - the membrane proton channel. CF(1) has five subunits: alpha(3), beta(3), gamma(1), delta(1), epsilon(1). CF(0) has three main subunits: a(1), b(2) and c(9-12). The alpha and beta chains form an alternating ring which encloses part of the gamma chain. CF(1) is attached to CF(0) by a central stalk formed by the gamma and epsilon chains, while a peripheral stalk is formed by the delta and b chains.

Its subcellular location is the cell inner membrane. In terms of biological role, key component of the proton channel; it plays a direct role in the translocation of protons across the membrane. The sequence is that of ATP synthase subunit a from Afipia carboxidovorans (strain ATCC 49405 / DSM 1227 / KCTC 32145 / OM5) (Oligotropha carboxidovorans).